We begin with the raw amino-acid sequence, 1384 residues long: DNA-directed RNA polymerase subunit beta' (1384 aa).

Residues Cys-81, Cys-83, Cys-96, and Cys-99 each contribute to the Zn(2+) site. 3 residues coordinate Mg(2+): Asp-472, Asp-474, and Asp-476.

This sequence belongs to the RNA polymerase beta' chain family. The RNAP catalytic core consists of 2 alpha, 1 beta, 1 beta' and 1 omega subunit. When a sigma factor is associated with the core the holoenzyme is formed, which can initiate transcription. Requires Mg(2+) as cofactor. The cofactor is Zn(2+).

The enzyme catalyses RNA(n) + a ribonucleoside 5'-triphosphate = RNA(n+1) + diphosphate. Its function is as follows. DNA-dependent RNA polymerase catalyzes the transcription of DNA into RNA using the four ribonucleoside triphosphates as substrates. This Opitutus terrae (strain DSM 11246 / JCM 15787 / PB90-1) protein is DNA-directed RNA polymerase subunit beta'.